Here is a 283-residue protein sequence, read N- to C-terminus: Elongation factor Ts (283 aa).

The segment at 80–83 is involved in Mg(2+) ion dislocation from EF-Tu; it reads TDFV.

This sequence belongs to the EF-Ts family.

It localises to the cytoplasm. Associates with the EF-Tu.GDP complex and induces the exchange of GDP to GTP. It remains bound to the aminoacyl-tRNA.EF-Tu.GTP complex up to the GTP hydrolysis stage on the ribosome. This Haemophilus influenzae (strain 86-028NP) protein is Elongation factor Ts.